The sequence spans 526 residues: GMP synthase [glutamine-hydrolyzing] (526 aa).

One can recognise a Glutamine amidotransferase type-1 domain in the interval 4-204 (KIVVLDFGSQ…AHAICGCSGD (201 aa)). Cys87 (nucleophile) is an active-site residue. Catalysis depends on residues His178 and Glu180. A GMPS ATP-PPase domain is found at 205–401 (WTPASFVEEQ…LDVPDPIVGR (197 aa)). 232 to 238 (SGGVDSS) contributes to the ATP binding site.

In terms of assembly, homodimer.

The enzyme catalyses XMP + L-glutamine + ATP + H2O = GMP + L-glutamate + AMP + diphosphate + 2 H(+). It functions in the pathway purine metabolism; GMP biosynthesis; GMP from XMP (L-Gln route): step 1/1. Functionally, catalyzes the synthesis of GMP from XMP. The protein is GMP synthase [glutamine-hydrolyzing] of Salinibacter ruber (strain DSM 13855 / M31).